A 342-amino-acid polypeptide reads, in one-letter code: Flavanone 3-dioxygenase 2 (342 aa).

The region spanning 193 to 293 (QEQHMAVNYY…RMSVASFLCP (101 aa)) is the Fe2OG dioxygenase domain. The Fe cation site is built by His-217, Asp-219, and His-274. Arg-284 is a 2-oxoglutarate binding site.

It belongs to the iron/ascorbate-dependent oxidoreductase family. It depends on Fe(2+) as a cofactor. L-ascorbate serves as cofactor. Expressed in roots, leaves and stems. Expressed at low levels in seeds.

The enzyme catalyses a (2S)-flavan-4-one + 2-oxoglutarate + O2 = a (2R,3R)-dihydroflavonol + succinate + CO2. It functions in the pathway secondary metabolite biosynthesis; flavonoid biosynthesis. Its function is as follows. Catalyzes the 3-beta-hydroxylation of 2S-flavanones to 2R,3R-dihydroflavonols which are intermediates in the biosynthesis of flavonols, anthocyanidins, catechins and proanthocyanidins in plants. Converts (2S)-eriodictyol to (+)-taxifolin and (2S)-naringenin to (+)-(2R/3R)-dihydrokaempferol in vitro. The polypeptide is Flavanone 3-dioxygenase 2 (Oryza sativa subsp. japonica (Rice)).